A 282-amino-acid chain; its full sequence is 2-dehydro-3-deoxyphosphooctonate aldolase (282 aa).

Belongs to the KdsA family.

Its subcellular location is the cytoplasm. It catalyses the reaction D-arabinose 5-phosphate + phosphoenolpyruvate + H2O = 3-deoxy-alpha-D-manno-2-octulosonate-8-phosphate + phosphate. It participates in carbohydrate biosynthesis; 3-deoxy-D-manno-octulosonate biosynthesis; 3-deoxy-D-manno-octulosonate from D-ribulose 5-phosphate: step 2/3. Its pathway is bacterial outer membrane biogenesis; lipopolysaccharide biosynthesis. This Bradyrhizobium diazoefficiens (strain JCM 10833 / BCRC 13528 / IAM 13628 / NBRC 14792 / USDA 110) protein is 2-dehydro-3-deoxyphosphooctonate aldolase.